The primary structure comprises 191 residues: Protein HP-20 homolog (191 aa).

The signal sequence occupies residues 1–16; the sequence is MADLRILVSIILMTNA. In terms of domain architecture, Collagen-like spans 22–58; sequence GCTGPPGPPGHPGPPGIRGPPGIRGIPGLPGPPGTPG. The tract at residues 22–61 is disordered; that stretch reads GCTGPPGPPGHPGPPGIRGPPGIRGIPGLPGPPGTPGPSV. Pro residues predominate over residues 26 to 39; sequence PPGPPGHPGPPGIR. In terms of domain architecture, C1q spans 64–191; that stretch reads PCHRQSAFTV…VTIYFSGFLT (128 aa).

The protein localises to the secreted. The polypeptide is Protein HP-20 homolog (Bos taurus (Bovine)).